A 103-amino-acid chain; its full sequence is Small ribosomal subunit protein uS10 (103 aa).

It belongs to the universal ribosomal protein uS10 family. As to quaternary structure, part of the 30S ribosomal subunit.

Its function is as follows. Involved in the binding of tRNA to the ribosomes. The chain is Small ribosomal subunit protein uS10 from Pseudoalteromonas atlantica (strain T6c / ATCC BAA-1087).